A 64-amino-acid polypeptide reads, in one-letter code: MPKAKTHSGASKRFRTTGSGKVVRQKANRRHLLEHKPTKRTRRLDGRTVVAANDVKRVKKLLNG.

Composition is skewed to basic residues over residues 1–15 (MPKA…KRFR) and 23–42 (VRQK…KRTR). The interval 1-45 (MPKAKTHSGASKRFRTTGSGKVVRQKANRRHLLEHKPTKRTRRLD) is disordered.

This sequence belongs to the bacterial ribosomal protein bL35 family.

In Mycolicibacterium vanbaalenii (strain DSM 7251 / JCM 13017 / BCRC 16820 / KCTC 9966 / NRRL B-24157 / PYR-1) (Mycobacterium vanbaalenii), this protein is Large ribosomal subunit protein bL35.